A 238-amino-acid polypeptide reads, in one-letter code: CASP-like protein 2BC2 (238 aa).

Residues 1 to 66 lie on the Cytoplasmic side of the membrane; that stretch reads MPSSTYPRRR…FHQKVAVEKR (66 aa). A helical membrane pass occupies residues 67 to 87; sequence LKIGEVILRFAMIALALVAAV. The Extracellular portion of the chain corresponds to 88–111; sequence RVGTDTQTRTIFTIEKKAKYSDMK. Residues 112-132 traverse the membrane as a helical segment; that stretch reads ALVFLVVMNGIVASYSLLQGL. Residues 133 to 148 lie on the Cytoplasmic side of the membrane; it reads RCVLSIYTQSPLTSKP. Residues 149–169 traverse the membrane as a helical segment; that stretch reads LAWLIFALDQTMAYFSLAAAA. Residues 170-200 lie on the Extracellular side of the membrane; sequence AAAESAYLAERGQTEFQWMKVCIFYEKFCHQ. Residues 201–221 form a helical membrane-spanning segment; sequence IGEGLVSTFLVSLSMATVSGM. At 222-238 the chain is on the cytoplasmic side; the sequence is SAYHLFRLYGSKGKSIQ.

The protein belongs to the Casparian strip membrane proteins (CASP) family. In terms of assembly, homodimer and heterodimers.

It localises to the cell membrane. The protein is CASP-like protein 2BC2 of Picea sitchensis (Sitka spruce).